The following is a 299-amino-acid chain: 33 kDa chaperonin (299 aa).

2 disulfides stabilise this stretch: Cys-234–Cys-236 and Cys-268–Cys-271.

It belongs to the HSP33 family. In terms of processing, under oxidizing conditions two disulfide bonds are formed involving the reactive cysteines. Under reducing conditions zinc is bound to the reactive cysteines and the protein is inactive.

It localises to the cytoplasm. Redox regulated molecular chaperone. Protects both thermally unfolding and oxidatively damaged proteins from irreversible aggregation. Plays an important role in the bacterial defense system toward oxidative stress. The protein is 33 kDa chaperonin of Pseudomonas putida (strain GB-1).